Here is a 205-residue protein sequence, read N- to C-terminus: Probable GTP-binding protein EngB (205 aa).

One can recognise an EngB-type G domain in the interval 25 to 199; sequence NGIEIAFIGY…KLSLNSSYKK (175 aa). GTP-binding positions include 33–40, 60–64, 78–81, 145–148, and 178–180; these read GYSNTGKS, GRTQL, DLPG, TKCD, and FSS. Mg(2+) contacts are provided by S40 and T62.

The protein belongs to the TRAFAC class TrmE-Era-EngA-EngB-Septin-like GTPase superfamily. EngB GTPase family. Requires Mg(2+) as cofactor.

In terms of biological role, necessary for normal cell division and for the maintenance of normal septation. The protein is Probable GTP-binding protein EngB of Buchnera aphidicola subsp. Acyrthosiphon pisum (strain 5A).